The following is a 383-amino-acid chain: E3 ubiquitin-protein ligase Os04g0590900 (383 aa).

A helical membrane pass occupies residues 53–73 (PVFSPLVIAIIGVLASAFLLV). The tract at residues 105-129 (GGAGSGGRHGHGQSRSHESWNVSPP) is disordered. An RING-type; atypical zinc finger spans residues 157–199 (CSVCLGEFSDGESLRLLPRCSHAFHQQCIDTWLKSHSNCPLCR). Disordered stretches follow at residues 269 to 291 (EANGAAEIREEGSPPKRGASSFD) and 320 to 383 (LLAG…DHPM).

The protein resides in the membrane. It carries out the reaction S-ubiquitinyl-[E2 ubiquitin-conjugating enzyme]-L-cysteine + [acceptor protein]-L-lysine = [E2 ubiquitin-conjugating enzyme]-L-cysteine + N(6)-ubiquitinyl-[acceptor protein]-L-lysine.. The protein operates within protein modification; protein ubiquitination. Functionally, possesses E3 ubiquitin-protein ligase in vitro. The protein is E3 ubiquitin-protein ligase Os04g0590900 of Oryza sativa subsp. japonica (Rice).